Reading from the N-terminus, the 353-residue chain is Phosphate acyltransferase (353 aa).

This sequence belongs to the PlsX family. In terms of assembly, homodimer. Probably interacts with PlsY.

It localises to the cytoplasm. The enzyme catalyses a fatty acyl-[ACP] + phosphate = an acyl phosphate + holo-[ACP]. Its pathway is lipid metabolism; phospholipid metabolism. In terms of biological role, catalyzes the reversible formation of acyl-phosphate (acyl-PO(4)) from acyl-[acyl-carrier-protein] (acyl-ACP). This enzyme utilizes acyl-ACP as fatty acyl donor, but not acyl-CoA. The polypeptide is Phosphate acyltransferase (Agrobacterium fabrum (strain C58 / ATCC 33970) (Agrobacterium tumefaciens (strain C58))).